Here is a 153-residue protein sequence, read N- to C-terminus: Nucleoside diphosphate kinase (153 aa).

ATP is bound by residues lysine 11, phenylalanine 59, arginine 87, threonine 93, arginine 104, and asparagine 114. The Pros-phosphohistidine intermediate role is filled by histidine 117.

The protein belongs to the NDK family. The cofactor is Mg(2+).

It catalyses the reaction a 2'-deoxyribonucleoside 5'-diphosphate + ATP = a 2'-deoxyribonucleoside 5'-triphosphate + ADP. It carries out the reaction a ribonucleoside 5'-diphosphate + ATP = a ribonucleoside 5'-triphosphate + ADP. In terms of biological role, major role in the synthesis of nucleoside triphosphates other than ATP. The ATP gamma phosphate is transferred to the NDP beta phosphate via a ping-pong mechanism, using a phosphorylated active-site intermediate. The chain is Nucleoside diphosphate kinase (swoH) from Emericella nidulans (strain FGSC A4 / ATCC 38163 / CBS 112.46 / NRRL 194 / M139) (Aspergillus nidulans).